The chain runs to 301 residues: Securin (301 aa).

3 disordered regions span residues 1–55, 82–120, and 218–284; these read MLPR…RTVL, DSPT…DTPL, and ASDQ…RSIH. The D-box 1 signature appears at 33 to 36; sequence RAPL. Positions 38–50 are enriched in polar residues; the sequence is STKQSNAPSSVTV. Residues 52-55 carry the D-box 2 motif; the sequence is RTVL. Polar residues-rich tracts occupy residues 88–98, 110–119, and 231–245; these read EPNSQGISRSA, PRRSSLTDTP, and VSKQ…STVY. Repeats lie at residues 250–260 and 270–280; these read ASGKSIPRPLS and ASGNSRRRPLS.

The protein belongs to the securin family. As to quaternary structure, interacts with the caspase-like cut1, and prevents its protease activity probably by covering its active site. Post-translationally, ubiquitinated by the anaphase promoting complex (APC) at the onset of anaphase, conducting to its degradation.

It is found in the cytoplasm. Its subcellular location is the nucleus. In terms of biological role, regulatory protein, which plays a central role in chromosome stability. Probably acts by blocking the action of key proteins. During the mitosis, it blocks separase/cut1 function, preventing the proteolysis of the cohesin complex and the subsequent segregation of the chromosomes. At the onset of anaphase, it is ubiquitinated, conducting to its destruction and to the liberation of cut1. The protein is Securin (cut2) of Schizosaccharomyces pombe (strain 972 / ATCC 24843) (Fission yeast).